The primary structure comprises 522 residues: Putative glucosylceramidase 3 (522 aa).

A signal peptide spans 1–21 (MSRWKVVILCLLSFMFEIGHA). Glutamate 259 functions as the Proton donor in the catalytic mechanism. Glutamate 364 functions as the Nucleophile in the catalytic mechanism.

The protein belongs to the glycosyl hydrolase 30 family.

It carries out the reaction a beta-D-glucosylceramide + H2O = an N-acyl-sphingoid base + D-glucose. The enzyme catalyses a beta-D-glucosyl-(1&lt;-&gt;1')-N-acylsphing-4-enine + H2O = an N-acylsphing-4-enine + D-glucose. The catalysed reaction is an N-acyl-1-beta-D-glucosyl-15-methylhexadecasphing-4-enine + H2O = an N-acyl-15-methylhexadecasphing-4-enine + D-glucose. The protein operates within lipid metabolism; sphingolipid metabolism. In terms of biological role, glucosylceramidase that catalyzes the hydrolysis of glucosylceramides into free ceramides and glucose. C.elegans contain specific sphingoid bases, which are unique or different in structure compared to the sphingoid bases found in other animals. Two examples of these distinctive compounds are: 15-methylhexadecasphinganine and 15-methylhexadecasphing-4-enine. This Caenorhabditis elegans protein is Putative glucosylceramidase 3.